The chain runs to 301 residues: Hydroxymycolate synthase MmaA4 (301 aa).

S-adenosyl-L-methionine is bound by residues 42–43 (YS), 81–83 (GCG), 103–108 (TLSKNQ), 132–133 (WE), and Ile145. The active site involves Cys278.

Belongs to the CFA/CMAS family. In terms of assembly, monomer.

It participates in lipid metabolism; mycolic acid biosynthesis. Its activity is regulated as follows. Inhibited by S-adenosyl-N-decyl-aminoethyl (SADAE). In terms of biological role, involved in the biosynthesis of hydroxymycolate, a common precursor of oxygenated mycolic acids (methoxy-mycolate and keto-mycolate). Probably transfers a methyl group from the S-adenosylmethionine (SAM) cofactor and, subsequently or simultaneously, a water molecule onto the double bound of ethylene substrates, leading to the formation of the hydroxylated product at the distal position. Involved in the activation of the antitubercular drug thiacetazone (TAC). The sequence is that of Hydroxymycolate synthase MmaA4 (mmaA4) from Mycobacterium tuberculosis (strain ATCC 25618 / H37Rv).